The following is a 368-amino-acid chain: Queuine tRNA-ribosyltransferase (368 aa).

Asp89 acts as the Proton acceptor in catalysis. Substrate-binding positions include 89–93 (DSGGF), Asp143, Gln187, and Gly214. Catalysis depends on Asp264, which acts as the Nucleophile. Residues 269–273 (TRNAR) are RNA binding; important for wobble base 34 recognition. Zn(2+)-binding residues include Cys302, Cys304, Cys307, and His333.

It belongs to the queuine tRNA-ribosyltransferase family. In terms of assembly, homodimer. Within each dimer, one monomer is responsible for RNA recognition and catalysis, while the other monomer binds to the replacement base PreQ1. Zn(2+) serves as cofactor.

It catalyses the reaction 7-aminomethyl-7-carbaguanine + guanosine(34) in tRNA = 7-aminomethyl-7-carbaguanosine(34) in tRNA + guanine. Its pathway is tRNA modification; tRNA-queuosine biosynthesis. Catalyzes the base-exchange of a guanine (G) residue with the queuine precursor 7-aminomethyl-7-deazaguanine (PreQ1) at position 34 (anticodon wobble position) in tRNAs with GU(N) anticodons (tRNA-Asp, -Asn, -His and -Tyr). Catalysis occurs through a double-displacement mechanism. The nucleophile active site attacks the C1' of nucleotide 34 to detach the guanine base from the RNA, forming a covalent enzyme-RNA intermediate. The proton acceptor active site deprotonates the incoming PreQ1, allowing a nucleophilic attack on the C1' of the ribose to form the product. After dissociation, two additional enzymatic reactions on the tRNA convert PreQ1 to queuine (Q), resulting in the hypermodified nucleoside queuosine (7-(((4,5-cis-dihydroxy-2-cyclopenten-1-yl)amino)methyl)-7-deazaguanosine). The polypeptide is Queuine tRNA-ribosyltransferase (Blochmanniella pennsylvanica (strain BPEN)).